A 307-amino-acid polypeptide reads, in one-letter code: Potassium channel subfamily K member 7 (307 aa).

Residues 1 to 10 (MGSLKPWARY) are Cytoplasmic-facing. The chain crosses the membrane as a helical span at residues 11–31 (LLLLMAHLLAMGLGAVVLQAL). Asparagine 83 is a glycosylation site (N-linked (GlcNAc...) asparagine). An intramembrane region (pore-forming) is located at residues 92-118 (LPSALLFTASILTTTGYGHMAPLSSGG). The chain crosses the membrane as a helical span at residues 120–140 (AFCVVYAALGLPASLALVAAL). Over 141–172 (RHCLLPVFSRPGDWVAIRWQLAPAQAALLQAA) the chain is Cytoplasmic. Residues 173 to 193 (GLGLLVACVFMLLPALVLWGV) traverse the membrane as a helical segment. The segment at residues 199–227 (LLEAIYFCFGSLSTIGLGDLLPAHGRGLH) is an intramembrane region (pore-forming). The chain crosses the membrane as a helical span at residues 233–253 (LGQFALLGYLLLGLLAMLLAV). The Cytoplasmic segment spans residues 254 to 307 (ETFSELPQVRAMVKFFGPSGSRTDEDQDGILGQDELALSTVLPDAPVLGPTTPA).

Belongs to the two pore domain potassium channel (TC 1.A.1.8) family. In terms of assembly, homodimer. Detected in embryo, eye, lung and liver. Weakly expressed in colon, testis, atria, kidney, intestine, bladder, uterus, ovary, salivary gland, thymus and brain stem. Not detected in brain, cerebellum, spinal cord, heart, ventricle, skeletal muscle, liver, placenta and pancreas. In the eye, highly expressed in the retinal ganglion cell layer and inner nuclear layer.

The protein localises to the membrane. In terms of biological role, probable potassium channel subunit. No channel activity observed in vitro as protein remains in the endoplasmic reticulum. May need to associate with an as yet unknown partner in order to reach the plasma membrane. This is Potassium channel subfamily K member 7 (Kcnk7) from Mus musculus (Mouse).